The primary structure comprises 123 residues: Ribosome-binding factor A (123 aa).

It belongs to the RbfA family. Monomer. Binds 30S ribosomal subunits, but not 50S ribosomal subunits or 70S ribosomes.

It is found in the cytoplasm. Functionally, one of several proteins that assist in the late maturation steps of the functional core of the 30S ribosomal subunit. Associates with free 30S ribosomal subunits (but not with 30S subunits that are part of 70S ribosomes or polysomes). Required for efficient processing of 16S rRNA. May interact with the 5'-terminal helix region of 16S rRNA. The sequence is that of Ribosome-binding factor A from Neisseria meningitidis serogroup A / serotype 4A (strain DSM 15465 / Z2491).